Here is a 120-residue protein sequence, read N- to C-terminus: Large ribosomal subunit protein eL34z (120 aa).

A disordered region spans residues 31 to 51 (VYQTTKKRASGPKCPVTGKRI).

Belongs to the eukaryotic ribosomal protein eL34 family.

The sequence is that of Large ribosomal subunit protein eL34z (RPL34A) from Arabidopsis thaliana (Mouse-ear cress).